A 154-amino-acid polypeptide reads, in one-letter code: Myoglobin (154 aa).

In terms of domain architecture, Globin spans 2–148 (GLSDGEWQLV…FRKDMASNYK (147 aa)). The residue at position 4 (Ser-4) is a Phosphoserine. Nitrite is bound at residue His-65. His-65 lines the O2 pocket. Thr-68 is modified (phosphothreonine). His-94 contacts heme b.

It belongs to the globin family. Monomeric.

Its subcellular location is the cytoplasm. It localises to the sarcoplasm. It catalyses the reaction Fe(III)-heme b-[protein] + nitric oxide + H2O = Fe(II)-heme b-[protein] + nitrite + 2 H(+). The enzyme catalyses H2O2 + AH2 = A + 2 H2O. Functionally, monomeric heme protein which primary function is to store oxygen and facilitate its diffusion within muscle tissues. Reversibly binds oxygen through a pentacoordinated heme iron and enables its timely and efficient release as needed during periods of heightened demand. Depending on the oxidative conditions of tissues and cells, and in addition to its ability to bind oxygen, it also has a nitrite reductase activity whereby it regulates the production of bioactive nitric oxide. Under stress conditions, like hypoxia and anoxia, it also protects cells against reactive oxygen species thanks to its pseudoperoxidase activity. The chain is Myoglobin from Homo sapiens (Human).